The following is a 560-amino-acid chain: MFS siderochrome iron transporter 1 (560 aa).

The N-linked (GlcNAc...) asparagine glycan is linked to Asn-29. A run of 11 helical transmembrane segments spans residues 53 to 73 (LWLTFALLYLVAFVDMLLVSV), 90 to 110 (LLASVSIVATILSGCSTLTLA), 115 to 135 (VWGRIEGFLFMLLVVVVALIM), 146 to 166 (VAAHTLYWTGHIGMIYCVDVM), 177 to 194 (MIMFSINNTPTIASTFAG), 211 to 231 (FGAFAIMLVGVSLPVIVIMLF), 264 to 284 (VVGIVLITASFALILLPFSIV), 291 to 311 (WATGYIIAMEVVGVVCGAIFL), 331 to 351 (PTIIGSCLLYGVMFASALLTI), 354 to 374 (AGYVLNSFSLSSAILAPGIGL), and 379 to 399 (FKWAAYAGIPFMLLGTALLIP). N-linked (GlcNAc...) asparagine glycosylation occurs at Asn-404. 3 helical membrane-spanning segments follow: residues 407 to 427 (IGAVTITQVLVGIGTSFFSVC), 441 to 461 (VAVVLAIWGMFGSIGASVGLA), and 522 to 542 (VIAGVCMMPLVMASIVIWRNV).

It belongs to the major facilitator superfamily.

It localises to the membrane. Major facilitator transporter involved in siderophore transport. This Ajellomyces capsulatus (Darling's disease fungus) protein is MFS siderochrome iron transporter 1.